The following is a 349-amino-acid chain: DNA replication and repair protein RecF (349 aa).

30 to 37 (GKNGSGKT) contacts ATP.

It belongs to the RecF family.

Its subcellular location is the cytoplasm. Functionally, the RecF protein is involved in DNA metabolism; it is required for DNA replication and normal SOS inducibility. RecF binds preferentially to single-stranded, linear DNA. It also seems to bind ATP. The polypeptide is DNA replication and repair protein RecF (Francisella tularensis subsp. tularensis (strain FSC 198)).